Reading from the N-terminus, the 207-residue chain is Putative zinc finger protein 137 (207 aa).

The C2H2-type 1 zinc finger occupies 72 to 94; it reads CKCNDCHKVFSNATTIANHWRIH. The C2H2-type 2; degenerate zinc-finger motif lies at 100–122; sequence YKCNKCGKIFRHRSYLAVYQRTH. A C2H2-type 3; degenerate zinc finger spans residues 128–150; sequence YKYHDCGKVFSQASSYAKHRRIH. 2 consecutive C2H2-type zinc fingers follow at residues 156-178 and 184-206; these read HKCD…QRIH and YKCL…QKIH.

The protein belongs to the krueppel C2H2-type zinc-finger protein family.

The protein localises to the nucleus. In terms of biological role, may be involved in transcriptional regulation. The chain is Putative zinc finger protein 137 (ZNF137P) from Homo sapiens (Human).